The chain runs to 340 residues: Tryptophan--tRNA ligase (340 aa).

Residues 11-13 (RPT) and 19-20 (GH) each bind ATP. The 'HIGH' region motif lies at 12–20 (PTGKLHLGH). D140 is an L-tryptophan binding site. ATP contacts are provided by residues 152–154 (GND), L194, and 202–206 (KMSKS). Residues 202 to 206 (KMSKS) carry the 'KMSKS' region motif.

This sequence belongs to the class-I aminoacyl-tRNA synthetase family. As to quaternary structure, homodimer.

The protein localises to the cytoplasm. The enzyme catalyses tRNA(Trp) + L-tryptophan + ATP = L-tryptophyl-tRNA(Trp) + AMP + diphosphate + H(+). In terms of biological role, catalyzes the attachment of tryptophan to tRNA(Trp). This Streptococcus mutans serotype c (strain ATCC 700610 / UA159) protein is Tryptophan--tRNA ligase.